Reading from the N-terminus, the 373-residue chain is Transcription factor NF-E2 45 kDa subunit (373 aa).

The required for interaction with MAPK8 stretch occupies residues 1 to 83; the sequence is MSPCPPQQSR…SGFPLPPPPY (83 aa). The interval 1-206 is transactivation domain; it reads MSPCPPQQSR…PAAETPLALE (206 aa). 2 short sequence motifs (PXY motif) span residues 61–65 and 79–83; these read PPTTY and PPPPY. Positions 127-150 are disordered; that stretch reads LDIGLPAGPPKPQEDPESDSGLSL. Serine 157 carries the post-translational modification Phosphoserine; by MAPK8. At serine 170 the chain carries Phosphoserine; by PKA. The segment at 205 to 226 is disordered; the sequence is LEPSSGPVRAKPTARGEAGSRD. Residues 266-329 enclose the bZIP domain; sequence LVRDIRRRGK…EVMRQQLTEL (64 aa). Residues 268–287 are basic motif; sequence RDIRRRGKNKVAAQNCRKRK. The interval 291–298 is leucine-zipper; it reads IVQLEREL. A Glycyl lysine isopeptide (Lys-Gly) (interchain with G-Cter in SUMO1) cross-link involves residue lysine 368.

The protein belongs to the bZIP family. CNC subfamily. In terms of assembly, homodimer; can bind DNA as a homodimer. Erythroid transcription activator nuclear factor erythroid-derived 2 (NF-E2), composed of a heterodimer of NFE2 and MAFK, possesses transactivation activity on beta-globin. Also forms high affinity heterodimer with MAFG; the interaction promotes erythropoiesis. Interacts (via the PXY motif 1) with ITCH (via the WW 1 domain); the interaction promotes 'Lys63'-linked ubiquitination of NFE2, translocates it to the cytoplasm and inhibits its transactivation activity. Interacts with KMT2D/MLL2; the interaction promotes transactivation of the beta-globin locus. Interacts with MAPK8 (phosphorylated form); the interaction leads to phosphorylation of NFE2 in undifferentiated cells. In terms of processing, phosphorylated on serine residues. In undifferentiated erythrocytes, phosphorylated by MAPK8 which then leads to ubiquitination and protein degradation. Sumoylated. Sumoylation is required for translocation to nuclear bodies PODs, anchoring to the gene loci, and transactivation of the beta-globin gene. Post-translationally, ubiquitinated mainly by 'Lys63'-linked ubiquitin. Polyubiquitination with 'Lys63'-linked ubiquitin by ITCH retains NFE2 in the cytoplasm preventing its transactivation activity. In undifferentiated erythrocyte, ubiquitinated after MAPK8-mediatd phosphorylation leading to protein degradation. In terms of tissue distribution, expressed in hematopoietic cells and also in colon and testis.

The protein resides in the nucleus. It is found in the PML body. The protein localises to the cytoplasm. Its function is as follows. Component of the NF-E2 complex essential for regulating erythroid and megakaryocytic maturation and differentiation. Binds to the hypersensitive site 2 (HS2) of the beta-globin control region (LCR). This subunit (NFE2) recognizes the TCAT/C sequence of the AP-1-like core palindrome present in a number of erythroid and megakaryocytic gene promoters. Requires MAFK or other small MAF proteins for binding to the NF-E2 motif. May play a role in all aspects of hemoglobin production from globin and heme synthesis to procurement of iron. In Homo sapiens (Human), this protein is Transcription factor NF-E2 45 kDa subunit (NFE2).